Here is a 317-residue protein sequence, read N- to C-terminus: MISLRQHAFSLAAVFLALAVGVVLGSGFLSDTLLSSLRDEKRDLYTQISGLNDQKNMLNEKVSAANNFDNQLLGRIVHDVLGGTSVVVFRTPDAKDDDVAAVSKIVVQAGGTVTGTVSLTQEFVDANSTEKLRSVVNSSILPAGAQLSTKLVDQGSQAGDLLGITLLVNANPAVPNVGDAQRSTVLVALRDTGFITYQTYNRNDHLGAANAALVITGGLLPQDAGNQGVSVARFSAALAPHGSGTLLAGRDGSATGVAAVAVARADAGMAATISTVDNVDAEPGRITAILGLHDLLSGGHTGQYGVGHGATSITVPQ.

Residues 1-28 form the signal peptide; it reads MISLRQHAFSLAAVFLALAVGVVLGSGF.

The protein belongs to the MctB (TC 1.B.50) family.

It localises to the cell outer membrane. Functionally, pore-forming protein, which is involved in efflux of copper across the outer membrane. Essential for copper resistance and maintenance of a low intracellular copper concentration. This chain is Copper transporter MctB (mctB), found in Mycobacterium leprae (strain TN).